Consider the following 492-residue polypeptide: Membrane-bound lytic murein transglycosylase F (492 aa).

The signal sequence occupies residues 1–18; that stretch reads MKGLFLRIIAIVALLLWA. The non-LT domain stretch occupies residues 19-268; that stretch reads IDMVFPWQQI…RIEEKYFNHL (250 aa). The segment at 270–492 is LT domain; it reads QFDYVDTRSY…DTLATTVTTQ (223 aa). Glu-313 is an active-site residue.

In the N-terminal section; belongs to the bacterial solute-binding protein 3 family. The protein in the C-terminal section; belongs to the transglycosylase Slt family.

It localises to the cell outer membrane. It carries out the reaction Exolytic cleavage of the (1-&gt;4)-beta-glycosidic linkage between N-acetylmuramic acid (MurNAc) and N-acetylglucosamine (GlcNAc) residues in peptidoglycan, from either the reducing or the non-reducing ends of the peptidoglycan chains, with concomitant formation of a 1,6-anhydrobond in the MurNAc residue.. Its function is as follows. Murein-degrading enzyme that degrades murein glycan strands and insoluble, high-molecular weight murein sacculi, with the concomitant formation of a 1,6-anhydromuramoyl product. Lytic transglycosylases (LTs) play an integral role in the metabolism of the peptidoglycan (PG) sacculus. Their lytic action creates space within the PG sacculus to allow for its expansion as well as for the insertion of various structures such as secretion systems and flagella. This chain is Membrane-bound lytic murein transglycosylase F, found in Pasteurella multocida (strain Pm70).